A 476-amino-acid polypeptide reads, in one-letter code: RNA-splicing ligase RtcB homolog (476 aa).

Residues aspartate 90, cysteine 93, histidine 198, histidine 230, and histidine 324 each coordinate Mn(2+). 197–201 is a GMP binding site; it reads NHYAE. GMP-binding positions include 324-325, 373-376, serine 380, 399-402, and lysine 475; these read HN, GGTM, and HGAG. The active-site GMP-histidine intermediate is histidine 399.

Belongs to the RtcB family. Catalytic component of the tRNA-splicing ligase complex. Requires Mn(2+) as cofactor.

The enzyme catalyses a 3'-end 3'-phospho-ribonucleotide-RNA + a 5'-end dephospho-ribonucleoside-RNA + GTP = a ribonucleotidyl-ribonucleotide-RNA + GMP + diphosphate. It catalyses the reaction a 3'-end 2',3'-cyclophospho-ribonucleotide-RNA + a 5'-end dephospho-ribonucleoside-RNA + GTP + H2O = a ribonucleotidyl-ribonucleotide-RNA + GMP + diphosphate + H(+). Catalytic subunit of the tRNA-splicing ligase complex that acts by directly joining spliced tRNA halves to mature-sized tRNAs by incorporating the precursor-derived splice junction phosphate into the mature tRNA as a canonical 3',5'-phosphodiester. May act as an RNA ligase with broad substrate specificity, and may function toward other RNAs. The polypeptide is RNA-splicing ligase RtcB homolog (Chlamydomonas reinhardtii (Chlamydomonas smithii)).